The primary structure comprises 76 residues: Sec-independent protein translocase protein TatA (76 aa).

Residues 1-21 (MGGISIWQLLIIALIVVLLFG) form a helical membrane-spanning segment. Residues 43-76 (MSSEDEKKAIEDTSAEKTAQTEEKKTESKDKEQA) are disordered. Positions 46-76 (EDEKKAIEDTSAEKTAQTEEKKTESKDKEQA) are enriched in basic and acidic residues.

It belongs to the TatA/E family. In terms of assembly, the Tat system comprises two distinct complexes: a TatABC complex, containing multiple copies of TatA, TatB and TatC subunits, and a separate TatA complex, containing only TatA subunits. Substrates initially bind to the TatABC complex, which probably triggers association of the separate TatA complex to form the active translocon.

It localises to the cell inner membrane. Functionally, part of the twin-arginine translocation (Tat) system that transports large folded proteins containing a characteristic twin-arginine motif in their signal peptide across membranes. TatA could form the protein-conducting channel of the Tat system. This is Sec-independent protein translocase protein TatA from Shewanella loihica (strain ATCC BAA-1088 / PV-4).